We begin with the raw amino-acid sequence, 259 residues long: MDCVPSLFMPDSTYEDGLLFSDSFLLSPFISYQNNDVFHSITNKIGGSNKKRSLCDITYGANEANKNDDDRESKKMKHRDIERQRRQEVSSLFKRLRTLLPFQYIQGKRSTSDHIVQAVNYIKDLQIKIKELNEKRNRVKKVISATTTTHSAIEECTSSLSSSAASTLSSSCSCVGDKHITVVVTPCLVGVEIIISCCLGRNKSCLSSVLQMLAQEQRFSVVSCLSARRQQRFMHTIVSQVEDGKQINILELKDKIMTM.

In terms of domain architecture, bHLH spans 73-125 (SKKMKHRDIERQRRQEVSSLFKRLRTLLPFQYIQGKRSTSDHIVQAVNYIKDL).

Homodimer.

The protein resides in the nucleus. The protein is Transcription factor bHLH125 (BHLH125) of Arabidopsis thaliana (Mouse-ear cress).